A 290-amino-acid chain; its full sequence is Pyridoxal kinase PdxY (290 aa).

Substrate-binding positions include Ser12 and 47 to 48 (TQ). Residues Asp114, Glu151, Lys184, and 211–214 (RPLL) contribute to the ATP site. Asp225 contributes to the substrate binding site.

It belongs to the pyridoxine kinase family. PdxY subfamily. In terms of assembly, homodimer. The cofactor is Mg(2+).

It carries out the reaction pyridoxal + ATP = pyridoxal 5'-phosphate + ADP + H(+). It participates in cofactor metabolism; pyridoxal 5'-phosphate salvage; pyridoxal 5'-phosphate from pyridoxal: step 1/1. Its function is as follows. Pyridoxal kinase involved in the salvage pathway of pyridoxal 5'-phosphate (PLP). Catalyzes the phosphorylation of pyridoxal to PLP. The polypeptide is Pyridoxal kinase PdxY (Pseudomonas fluorescens (strain SBW25)).